Here is a 299-residue protein sequence, read N- to C-terminus: Phosphatidylcholine-sterol acyltransferase (299 aa).

A glycan (N-linked (GlcNAc...) asparagine) is linked at asparagine 30. Catalysis depends on serine 127, which acts as the Nucleophile. Asparagine 185 is a glycosylation site (N-linked (GlcNAc...) asparagine). Cysteine 226 and cysteine 269 are joined by a disulfide. Catalysis depends on charge relay system residues aspartate 258 and histidine 290.

Belongs to the AB hydrolase superfamily. Lipase family.

The protein localises to the secreted. The catalysed reaction is a sterol + a 1,2-diacyl-sn-glycero-3-phosphocholine = a sterol ester + a 1-acyl-sn-glycero-3-phosphocholine. With respect to regulation, APOA1 is the most potent activator in plasma. Also activated by APOE, APOC1 and APOA4. Functionally, central enzyme in the extracellular metabolism of plasma lipoproteins. Synthesized mainly in the liver and secreted into plasma where it converts cholesterol and phosphatidylcholines (lecithins) to cholesteryl esters and lysophosphatidylcholines on the surface of high and low density lipoproteins (HDLs and LDLs). The cholesterol ester is then transported back to the liver. Has a preference for plasma 16:0-18:2 or 18:O-18:2 phosphatidylcholines. Also produced in the brain by primary astrocytes, and esterifies free cholesterol on nascent APOE-containing lipoproteins secreted from glia and influences cerebral spinal fluid (CSF) APOE- and APOA1 levels. Together with APOE and the cholesterol transporter ABCA1, plays a key role in the maturation of glial-derived, nascent lipoproteins. Required for remodeling high-density lipoprotein particles into their spherical forms. This Eliomys quercinus (Garden dormouse) protein is Phosphatidylcholine-sterol acyltransferase (LCAT).